The chain runs to 103 residues: Large ribosomal subunit protein bL21 (103 aa).

The protein belongs to the bacterial ribosomal protein bL21 family. As to quaternary structure, part of the 50S ribosomal subunit. Contacts protein L20.

This protein binds to 23S rRNA in the presence of protein L20. This chain is Large ribosomal subunit protein bL21, found in Mycobacterium sp. (strain JLS).